We begin with the raw amino-acid sequence, 185 residues long: Peptidyl-tRNA hydrolase (185 aa).

Tyr14 is a binding site for tRNA. His19 acts as the Proton acceptor in catalysis. Residues Tyr64, Asn66, and Asn112 each coordinate tRNA.

The protein belongs to the PTH family. As to quaternary structure, monomer.

It localises to the cytoplasm. It carries out the reaction an N-acyl-L-alpha-aminoacyl-tRNA + H2O = an N-acyl-L-amino acid + a tRNA + H(+). Functionally, hydrolyzes ribosome-free peptidyl-tRNAs (with 1 or more amino acids incorporated), which drop off the ribosome during protein synthesis, or as a result of ribosome stalling. In terms of biological role, catalyzes the release of premature peptidyl moieties from peptidyl-tRNA molecules trapped in stalled 50S ribosomal subunits, and thus maintains levels of free tRNAs and 50S ribosomes. This Ligilactobacillus salivarius (strain UCC118) (Lactobacillus salivarius) protein is Peptidyl-tRNA hydrolase.